Reading from the N-terminus, the 2034-residue chain is Sperm vesicle fusion protein fer-1 (2034 aa).

The disordered stretch occupies residues 1-80 (MTVKEKLLKV…GGSDIELLPD (80 aa)). Residues 1–1998 (MTVKEKLLKV…CIKYFWHYYG (1998 aa)) are Cytoplasmic-facing. Acidic residues predominate over residues 66-79 (ELSDDGGSDIELLP). C2 domains are found at residues 229-367 (RIDE…YLPT), 954-1082 (DSED…PQWF), 1120-1246 (YKER…KSDH), and 1363-1484 (KKGK…ATGG). Positions 1563-1619 (QKAGKENFSDGSDQQNEDVSDGSWDEEDLEREKEKLKWEKHRSKGKPLKKVTTEKAE) are disordered. Acidic residues predominate over residues 1577–1591 (QNEDVSDGSWDEEDL). The span at 1600-1611 (WEKHRSKGKPLK) shows a compositional bias: basic residues. A C2 5 domain is found at 1684-1831 (EYGAIPAPFN…EGIGSPSDVG (148 aa)). The tract at residues 1953–1972 (QEPAGKKRSEPNHSPFLEKP) is disordered. The helical transmembrane segment at 1999–2019 (LQILLWLIIIVILILTIFVLL) threads the bilayer. Over 2020–2034 (HTWPTILAEIIKAIF) the chain is Extracellular.

This sequence belongs to the ferlin family. In terms of tissue distribution, exclusively expressed in the testis.

Its subcellular location is the membrane. In terms of biological role, required for the fusion of the membranous organelles (MOs) with the plasma membrane, a process essential in spermiogenesis. In Caenorhabditis elegans, this protein is Sperm vesicle fusion protein fer-1 (fer-1).